An 82-amino-acid chain; its full sequence is Consomatin Ar1 (82 aa).

The signal sequence occupies residues 1–22; sequence MQTAYWVVVMMMMVWVTAPVSE. Positions 23–60 are excised as a propeptide; it reads GGKLSDVIWGLVPDDLTPQIILQILNASRHAYRRVRPR. C64 and C69 are oxidised to a cystine. At W66 the chain carries D-tryptophan. Residues P70, P71, and P73 each carry the 4-hydroxyproline modification. A propeptide spanning residues 74–82 is cleaved from the precursor; sequence QWIHPLVKR.

The protein belongs to the conotoxin C superfamily. Consomatin family. As to expression, expressed by the venom duct.

It localises to the secreted. Its function is as follows. Moderately activates human somatostatin receptors (SSTR) with a preferential activation of SSTR1 and SSTR4. In vivo, does not cause behavioral changes in mice within a few minutes of intracranial injection, but causes a progressive loss of movement thereafter. Four to five hours after injection, mice recover, even with the highest dose tested. Shows antinociception and antihyperalgesia activities in two mouse models of acute pain, most probably by acting outside the central nervous system. This chain is Consomatin Ar1, found in Conus arenatus (Sand-dusted cone).